Reading from the N-terminus, the 979-residue chain is Pro-apoptotic serine protease NMA111 (979 aa).

Residues 1–20 (MTIMNEGKKRSHSSSSDDHL) are disordered. The interval 65–255 (VVSIHFAQVA…LPLDRILRAL (191 aa)) is serine protease. Catalysis depends on charge relay system residues histidine 103, aspartate 134, and serine 217. PDZ domains follow at residues 273–361 (WLLK…RGGT) and 750–836 (SILH…VRDG).

It belongs to the peptidase S1C family.

The protein resides in the nucleus. Functionally, nuclear serine protease which mediates apoptosis. The polypeptide is Pro-apoptotic serine protease NMA111 (NMA111) (Candida glabrata (strain ATCC 2001 / BCRC 20586 / JCM 3761 / NBRC 0622 / NRRL Y-65 / CBS 138) (Yeast)).